A 182-amino-acid chain; its full sequence is Crossover junction endodeoxyribonuclease RuvC (182 aa).

Residues Asp-7, Glu-69, and Asp-141 contribute to the active site. Mg(2+) is bound by residues Asp-7, Glu-69, and Asp-141.

The protein belongs to the RuvC family. Homodimer which binds Holliday junction (HJ) DNA. The HJ becomes 2-fold symmetrical on binding to RuvC with unstacked arms; it has a different conformation from HJ DNA in complex with RuvA. In the full resolvosome a probable DNA-RuvA(4)-RuvB(12)-RuvC(2) complex forms which resolves the HJ. The cofactor is Mg(2+).

It localises to the cytoplasm. It catalyses the reaction Endonucleolytic cleavage at a junction such as a reciprocal single-stranded crossover between two homologous DNA duplexes (Holliday junction).. In terms of biological role, the RuvA-RuvB-RuvC complex processes Holliday junction (HJ) DNA during genetic recombination and DNA repair. Endonuclease that resolves HJ intermediates. Cleaves cruciform DNA by making single-stranded nicks across the HJ at symmetrical positions within the homologous arms, yielding a 5'-phosphate and a 3'-hydroxyl group; requires a central core of homology in the junction. The consensus cleavage sequence is 5'-(A/T)TT(C/G)-3'. Cleavage occurs on the 3'-side of the TT dinucleotide at the point of strand exchange. HJ branch migration catalyzed by RuvA-RuvB allows RuvC to scan DNA until it finds its consensus sequence, where it cleaves and resolves the cruciform DNA. This Albidiferax ferrireducens (strain ATCC BAA-621 / DSM 15236 / T118) (Rhodoferax ferrireducens) protein is Crossover junction endodeoxyribonuclease RuvC.